Consider the following 160-residue polypeptide: Transcription elongation factor GreA (160 aa).

Residues 3-84 adopt a coiled-coil conformation; it reads SIVNDKILLT…SKAKIIKADL (82 aa).

The protein belongs to the GreA/GreB family.

Its function is as follows. Necessary for efficient RNA polymerase transcription elongation past template-encoded arresting sites. The arresting sites in DNA have the property of trapping a certain fraction of elongating RNA polymerases that pass through, resulting in locked ternary complexes. Cleavage of the nascent transcript by cleavage factors such as GreA or GreB allows the resumption of elongation from the new 3'terminus. GreA releases sequences of 2 to 3 nucleotides. In Mesomycoplasma hyopneumoniae (strain 7448) (Mycoplasma hyopneumoniae), this protein is Transcription elongation factor GreA.